The following is a 225-amino-acid chain: pH-response regulator palI/RIM9 homolog 2 (225 aa).

The Cytoplasmic segment spans residues 1–4 (MLVK). A helical transmembrane segment spans residues 5 to 25 (IVLVVLLTLALVFECFSTISV). Over 26 to 87 (PITIGLYISE…PNHAKYALSN (62 aa)) the chain is Extracellular. A helical membrane pass occupies residues 88 to 108 (LLLVHVLAFVCVTILWVFGML). Residues 109-120 (TCFRCIKTSRRM) are Cytoplasmic-facing. A helical membrane pass occupies residues 121 to 141 (LIIAVLWSMLTFMVTLLGFLI). At 142–153 (DILIFSSHVTWC) the chain is on the extracellular side. Residues 154–174 (TWLTLASAFFTVLSGTVLCVM) form a helical membrane-spanning segment. Over 175 to 225 (RRNLTYDKFLESKPEKHGVYVPLCRLNDVEELEIPWCNTMNHQALTAPTPM) the chain is Cytoplasmic.

The protein belongs to the palI/RIM9 family.

Its subcellular location is the cell membrane. Required for the proteolytic cleavage of the transcription factor RIM101 in response to alkaline ambient pH. This chain is pH-response regulator palI/RIM9 homolog 2, found in Kluyveromyces lactis (strain ATCC 8585 / CBS 2359 / DSM 70799 / NBRC 1267 / NRRL Y-1140 / WM37) (Yeast).